Reading from the N-terminus, the 242-residue chain is DNA repair protein RecO (242 aa).

This sequence belongs to the RecO family. Monomer.

Functionally, involved in DNA repair and RecF pathway recombination. This Salmonella schwarzengrund (strain CVM19633) protein is DNA repair protein RecO.